A 143-amino-acid polypeptide reads, in one-letter code: MLMGQYEHTIDAKGRVIIPAKFRGELGDRFVLTKGLDNCLFVYSLEEWKNIEAKLKTLPLTKKDARAFTRFFLAGAVECEIDKQGRILIPANLREHAKIEKDVIFIGVSTRVEIWSKEVWEEYSNNTDVSFEEIAEHLDELNI.

2 SpoVT-AbrB domains span residues 5–47 (QYEH…SLEE) and 76–119 (AVEC…SKEV).

This sequence belongs to the MraZ family. As to quaternary structure, forms oligomers.

It is found in the cytoplasm. The protein resides in the nucleoid. This chain is Transcriptional regulator MraZ, found in Thermoanaerobacter pseudethanolicus (strain ATCC 33223 / 39E) (Clostridium thermohydrosulfuricum).